The chain runs to 237 residues: Ribonuclease PH (237 aa).

Phosphate is bound by residues arginine 86 and 124 to 126 (GTR).

It belongs to the RNase PH family. Homohexameric ring arranged as a trimer of dimers.

It carries out the reaction tRNA(n+1) + phosphate = tRNA(n) + a ribonucleoside 5'-diphosphate. Functionally, phosphorolytic 3'-5' exoribonuclease that plays an important role in tRNA 3'-end maturation. Removes nucleotide residues following the 3'-CCA terminus of tRNAs; can also add nucleotides to the ends of RNA molecules by using nucleoside diphosphates as substrates, but this may not be physiologically important. Probably plays a role in initiation of 16S rRNA degradation (leading to ribosome degradation) during starvation. In Shewanella baltica (strain OS223), this protein is Ribonuclease PH.